The following is a 184-amino-acid chain: Photosystem I assembly protein Ycf3 (184 aa).

TPR repeat units lie at residues 31–64 (AFAY…DEDQ), 68–101 (SYTL…NSNL), and 131–164 (MEIS…APDN).

Belongs to the Ycf3 family.

It is found in the plastid. The protein resides in the chloroplast thylakoid membrane. Functionally, essential for the assembly of the photosystem I (PSI) complex. May act as a chaperone-like factor to guide the assembly of the PSI subunits. In Thalassiosira pseudonana (Marine diatom), this protein is Photosystem I assembly protein Ycf3.